An 863-amino-acid chain; its full sequence is Alanine--tRNA ligase (863 aa).

Positions 552, 556, 654, and 658 each coordinate Zn(2+).

It belongs to the class-II aminoacyl-tRNA synthetase family. It depends on Zn(2+) as a cofactor.

The protein resides in the cytoplasm. The enzyme catalyses tRNA(Ala) + L-alanine + ATP = L-alanyl-tRNA(Ala) + AMP + diphosphate. In terms of biological role, catalyzes the attachment of alanine to tRNA(Ala) in a two-step reaction: alanine is first activated by ATP to form Ala-AMP and then transferred to the acceptor end of tRNA(Ala). Also edits incorrectly charged Ser-tRNA(Ala) and Gly-tRNA(Ala) via its editing domain. The chain is Alanine--tRNA ligase from Halorhodospira halophila (strain DSM 244 / SL1) (Ectothiorhodospira halophila (strain DSM 244 / SL1)).